Reading from the N-terminus, the 279-residue chain is uncharacterized protein (279 aa).

This is an uncharacterized protein from Borreliella burgdorferi (strain ATCC 35210 / DSM 4680 / CIP 102532 / B31) (Borrelia burgdorferi).